An 84-amino-acid polypeptide reads, in one-letter code: Cell division topological specificity factor (84 aa).

This sequence belongs to the MinE family.

In terms of biological role, prevents the cell division inhibition by proteins MinC and MinD at internal division sites while permitting inhibition at polar sites. This ensures cell division at the proper site by restricting the formation of a division septum at the midpoint of the long axis of the cell. The sequence is that of Cell division topological specificity factor from Burkholderia mallei (strain NCTC 10247).